Reading from the N-terminus, the 852-residue chain is MIITPYLNRKITRPLKWILALIFLYLIYICLFSNNSKPPKPRKKPKLVENYTCPFARTEGTASENLFFHTNNGTDARILVILDSLFSRHGKTIIQILNSQKLQFKAEAVSKNLPVLTTSRRGRYSLIIIENYYKYLNMAQWNRQLLDKYCKEYRVPMFSFMSSKPNDQLKRIKIKGSSLWMWQNQRIQRLAVTPSIIHRISKIGNYRQFSSSDPADWILFETSEKFESVLSGTVKSGYERAVVVRDKGLEDGVERIIFGRNLTDFQVKITFLDALWWAMGNQKSFTLDRFVQVDIDDVFVGAQGTRIVEEDVRKLISTQKEFRNYVQNFTFMLGFSGSYFRNGDDLEDRGDEFLVENAEKFVWFPHMWRHNHAHEHNFTYLEAIMAQNKLFAQNMHLPVDYPYAIAPQHDGVFPVHEQLFRAWRKVWNVSVTATEEYPHFKPATARKGFIHAGIHVLPRQTCGLYTHTQLFDEYPEGFDKVQKSIEGGDLFFTILLNPISIFMTHQQNYAYDRLALYTFENLFRFIKCWTNIKLKWQDPLTSSQLYFQKFPDERTPLWTNPCTDPRHHAILPPSINCTKKSLPDLLIIGPQKTGSTALASFLSLHPNTSQNTPVPGSFEEVQFFGGQNYLKGVEWYMSNFPSSSTVTFEKSATYFDNPSAPKQAASLVPHAKIVIILQNPAQRAYSWFQHILAHEDPVAITAGSLEVILDSNSTSSKKVRQRCISGGRYVHHLTKWLEHFSLQQMIFVDSDELKMKPPTVLNSLSKWLDLPEFPFETYIRYSPSKGFHCRLLDGKTKCLGESKGRKYPEMPENLRRKLDKIFSLDNSALYKFLRKNRLKIPTWLEESVRIRA.

Over 1 to 13 the chain is Cytoplasmic; sequence MIITPYLNRKITR. A helical; Signal-anchor for type II membrane protein membrane pass occupies residues 14-34; that stretch reads PLKWILALIFLYLIYICLFSN. The heparan sulfate N-deacetylase 1 stretch occupies residues 34-574; it reads NNSKPPKPRK…PRHHAILPPS (541 aa). Residues 35–852 are Lumenal-facing; the sequence is NSKPPKPRKK…WLEESVRIRA (818 aa). N-linked (GlcNAc...) asparagine glycans are attached at residues N50, N72, N261, N328, N377, N428, and N576. The interval 575-852 is heparan sulfate N-sulfotransferase 1; the sequence is INCTKKSLPD…WLEESVRIRA (278 aa). The active-site For sulfotransferase activity is the K592. Residue 592–596 participates in 3'-phosphoadenylyl sulfate binding; it reads KTGST. A glycan (N-linked (GlcNAc...) asparagine) is linked at N607. S686 is a 3'-phosphoadenylyl sulfate binding site. An N-linked (GlcNAc...) asparagine glycan is attached at N712. An intrachain disulfide couples C789 to C798. Residue 803-807 participates in 3'-phosphoadenylyl sulfate binding; sequence KGRKY.

The protein belongs to the sulfotransferase 1 family. NDST subfamily. As to quaternary structure, monomer. In terms of tissue distribution, present in some specific neurons in head and tail regions and muscles.

The protein resides in the golgi apparatus membrane. The catalysed reaction is alpha-D-glucosaminyl-[heparan sulfate](n) + 3'-phosphoadenylyl sulfate = N-sulfo-alpha-D-glucosaminyl-[heparan sulfate](n) + adenosine 3',5'-bisphosphate + 2 H(+). Its pathway is glycan metabolism; heparan sulfate biosynthesis. It participates in glycan metabolism; heparin biosynthesis. In terms of biological role, essential bifunctional enzyme that catalyzes both the N-deacetylation and the N-sulfation of glucosamine (GlcNAc) of the glycosaminoglycan in heparan sulfate. Modifies the GlcNAc-GlcA disaccharide repeating sugar backbone to make N-sulfated heparosan, a prerequisite substrate for later modifications in heparin biosynthesis. The polypeptide is Bifunctional heparan sulfate N-deacetylase/N-sulfotransferase 1 (hst-1) (Caenorhabditis elegans).